Reading from the N-terminus, the 478-residue chain is Ribulose bisphosphate carboxylase large chain (478 aa).

Positions 1–2 are excised as a propeptide; it reads MS. Proline 3 bears the N-acetylproline mark. Lysine 14 carries the post-translational modification N6,N6,N6-trimethyllysine. Asparagine 123 and threonine 173 together coordinate substrate. The active-site Proton acceptor is the lysine 175. A substrate-binding site is contributed by lysine 177. Residues lysine 201, aspartate 203, and glutamate 204 each coordinate Mg(2+). The residue at position 201 (lysine 201) is an N6-carboxylysine. Histidine 294 serves as the catalytic Proton acceptor. Substrate-binding residues include arginine 295, histidine 327, and serine 379.

This sequence belongs to the RuBisCO large chain family. Type I subfamily. As to quaternary structure, heterohexadecamer of 8 large chains and 8 small chains; disulfide-linked. The disulfide link is formed within the large subunit homodimers. Mg(2+) serves as cofactor. Post-translationally, the disulfide bond which can form in the large chain dimeric partners within the hexadecamer appears to be associated with oxidative stress and protein turnover.

Its subcellular location is the plastid. The protein localises to the chloroplast. It carries out the reaction 2 (2R)-3-phosphoglycerate + 2 H(+) = D-ribulose 1,5-bisphosphate + CO2 + H2O. The enzyme catalyses D-ribulose 1,5-bisphosphate + O2 = 2-phosphoglycolate + (2R)-3-phosphoglycerate + 2 H(+). RuBisCO catalyzes two reactions: the carboxylation of D-ribulose 1,5-bisphosphate, the primary event in carbon dioxide fixation, as well as the oxidative fragmentation of the pentose substrate in the photorespiration process. Both reactions occur simultaneously and in competition at the same active site. The protein is Ribulose bisphosphate carboxylase large chain of Neurachne tenuifolia.